Reading from the N-terminus, the 278-residue chain is Undecaprenyl-diphosphatase 3 (278 aa).

6 consecutive transmembrane segments (helical) span residues 42 to 62 (DITAFTAIIQVGAVFATLLYF), 88 to 108 (YRFGWAVILGSIPIGLVGVAF), 119 to 139 (LWFVGGALILWSGVMGYADHV), 187 to 207 (VAVTRLSFFLSIPALMAAAAL), 224 to 244 (ATIIATVVSFAVAYVAIAWLL), and 254 to 274 (VFIGYRLALGATVLFLVATGI).

Belongs to the UppP family.

The protein resides in the cell membrane. It catalyses the reaction di-trans,octa-cis-undecaprenyl diphosphate + H2O = di-trans,octa-cis-undecaprenyl phosphate + phosphate + H(+). In terms of biological role, catalyzes the dephosphorylation of undecaprenyl diphosphate (UPP). Confers resistance to bacitracin. This chain is Undecaprenyl-diphosphatase 3, found in Frankia casuarinae (strain DSM 45818 / CECT 9043 / HFP020203 / CcI3).